The primary structure comprises 370 residues: Actin-related protein 2/3 complex subunit 1A (370 aa).

WD repeat units lie at residues phenylalanine 6–alanine 45, glutamate 50–threonine 89, proline 140–lysine 179, glycine 202–threonine 241, threonine 244–serine 284, and leucine 322–glutamine 365.

It belongs to the WD repeat ARPC1 family. As to quaternary structure, probable component of the Arp2/3 complex in which it may replace ARPC1B.

It is found in the cytoplasm. It localises to the cytoskeleton. The protein localises to the nucleus. Functionally, probably functions as a component of the Arp2/3 complex which is involved in regulation of actin polymerization and together with an activating nucleation-promoting factor (NPF) mediates the formation of branched actin networks. In addition to its role in the cytoplasmic cytoskeleton, the Arp2/3 complex also promotes actin polymerization in the nucleus, thereby regulating gene transcription and repair of damaged DNA. In Rattus norvegicus (Rat), this protein is Actin-related protein 2/3 complex subunit 1A (Arpc1a).